The primary structure comprises 99 residues: Beta-2-microglobulin (99 aa).

Positions 5–93 (PRVQVYSRHP…HITLSEPKIV (89 aa)) constitute an Ig-like C1-type domain. C25 and C80 are oxidised to a cystine.

Belongs to the beta-2-microglobulin family. Heterodimer of an alpha chain and a beta chain. Beta-2-microglobulin is the beta-chain of major histocompatibility complex class I molecules.

The protein resides in the secreted. Component of the class I major histocompatibility complex (MHC). Involved in the presentation of peptide antigens to the immune system. The polypeptide is Beta-2-microglobulin (B2M) (Cavia porcellus (Guinea pig)).